The sequence spans 74 residues: Anionic peptide clone 10 (74 aa).

An N-terminal signal peptide occupies residues 1 to 24; sequence MVSKSLIVLLLVSVLVSTFFTTEA.

This sequence belongs to the non-disulfide-bridged peptide (NDBP) superfamily. Long chain multifunctional peptide (group 2) family. As to expression, expressed by the venom gland.

It localises to the secreted. In terms of biological role, may be an antimicrobial peptide. This Tityus costatus (Brazilian scorpion) protein is Anionic peptide clone 10.